Consider the following 287-residue polypeptide: Aquaporin PIP1-1 (287 aa).

The next 2 membrane-spanning stretches (helical) occupy residues 57–77 and 92–114; these read IAEF…VMGV and IAWS…SGHI. Residues 115–117 carry the NPA 1 motif; that stretch reads NPA. 3 helical membrane passes run 134 to 154, 176 to 196, and 210 to 230; these read VFYI…VKGF, GDGL…VFSA, and ILAP…TMGI. Positions 236–238 match the NPA 2 motif; it reads NPA. Residues 258 to 278 form a helical membrane-spanning segment; sequence IFWVGPFIGAALAAIYHQVII.

The protein belongs to the MIP/aquaporin (TC 1.A.8) family. PIP (TC 1.A.8.11) subfamily. May interact with PIP1-2 to form heteromers. In terms of tissue distribution, highly expressed in roots, shoots and developing tassels, and at lower levels in leaves.

Its subcellular location is the cell membrane. Its function is as follows. Water channel required to facilitate the transport of water across cell membrane. Active as heteromers with PIP1-2, but not as homomers. This chain is Aquaporin PIP1-1 (PIP1-1), found in Zea mays (Maize).